The following is a 350-amino-acid chain: Magnesium-chelatase 38 kDa subunit (350 aa).

Position 52–59 (52–59) interacts with ATP; that stretch reads GDRGTGKS.

This sequence belongs to the Mg-chelatase subunits D/I family.

The enzyme catalyses protoporphyrin IX + Mg(2+) + ATP + H2O = Mg-protoporphyrin IX + ADP + phosphate + 3 H(+). It participates in porphyrin-containing compound metabolism; bacteriochlorophyll biosynthesis. Its function is as follows. Involved in bacteriochlorophyll biosynthesis; introduces a magnesium ion into protoporphyrin IX to yield Mg-protoporphyrin IX. The sequence is that of Magnesium-chelatase 38 kDa subunit (bchI) from Rhodobacter capsulatus (strain ATCC BAA-309 / NBRC 16581 / SB1003).